The chain runs to 618 residues: Crinkler effector protein 16 (618 aa).

The N-terminal stretch at 1-19 (MVVVSLQCAIVGQAGSSFD) is a signal peptide. The tract at residues 18-57 (FDVEIDDGAKVSKLKDAIKAKKPNDFKVVDADKLHLFLAK) is LQLFLAK domain. The tract at residues 58–139 (QPVEDESGKE…NMELPSSEQI (82 aa)) is DWL domain. An HVLVXXP motif motif is present at residues 140 to 146 (HVLVVVP). The N-linked (GlcNAc...) asparagine glycan is linked to asparagine 534.

This sequence belongs to the Crinkler effector family.

The protein resides in the secreted. The protein localises to the host nucleus. Functionally, secreted effector that elicits necrosis in host plants, a characteristic of plant innate immunity. This chain is Crinkler effector protein 16, found in Phytophthora infestans (Potato late blight agent).